The following is a 63-amino-acid chain: Light-harvesting protein B-800/850 alpha chain (63 aa).

The Cytoplasmic segment spans residues 1–14; sequence MNNAKMWLVVKPTV. The chain crosses the membrane as a helical span at residues 15–35; it reads GIPLFLVACAIASFLVHLMLV. H31 contributes to the a bacteriochlorophyll binding site. Topologically, residues 36-63 are periplasmic; that stretch reads LTTGWMGDYYSGSFEAASLVSNATTLLS.

This sequence belongs to the antenna complex alpha subunit family. As to quaternary structure, the core complex is formed by different alpha and beta chains, binding bacteriochlorophyll molecules, and arranged most probably in tetrameric structures disposed around the reaction center. The non-pigmented gamma chains may constitute additional components.

Its subcellular location is the cell inner membrane. In terms of biological role, antenna complexes are light-harvesting systems, which transfer the excitation energy to the reaction centers. This chain is Light-harvesting protein B-800/850 alpha chain (pucA), found in Rhodovulum sulfidophilum (Rhodobacter sulfidophilus).